A 102-amino-acid chain; its full sequence is Small ribosomal subunit protein uS10 (102 aa).

This sequence belongs to the universal ribosomal protein uS10 family. Part of the 30S ribosomal subunit.

Its function is as follows. Involved in the binding of tRNA to the ribosomes. The polypeptide is Small ribosomal subunit protein uS10 (Lactobacillus helveticus (strain DPC 4571)).